The chain runs to 235 residues: MASLDRVKVLVLGDSGVGKSSLVHLLCQNQVLGNPSWTVGCSVDVRLHEYREGTPEEKTYYTELWDVGGSVGSASSVKSTRAVFYNAVNGIILVHDLTNKKSSQNLYRWSLEALNRDLQPMGVLVTNGDYDREQFADNQIPLLVIGTKLDQIPEAKRNEVLTRTAFLAEDFNAEEINLDCTNTRCLAAGSSNAVKLSRFFDKVIEKRYPREGNLIPGFSDRKRFGGGNFKSLHYD.

Positions 1 to 235 (MASLDRVKVL…GGNFKSLHYD (235 aa)) are small GTPase-like. Residues 16–21 (GVGKSS), 148–150 (KLD), and 179–180 (DC) contribute to the GTP site.

Belongs to the small GTPase superfamily. Rab family. Homodimer.

Functionally, required for KRAS signaling regulation and modulation of cell proliferation. Regulator of KRAS prenylation, and probably prenylation of other small GTPases. Required for lymphocyte development and function. Not required for myeloid cell development. This chain is Rab-like protein 3 (rabl3), found in Xenopus laevis (African clawed frog).